A 113-amino-acid polypeptide reads, in one-letter code: Large ribosomal subunit protein bL20c (113 aa).

Belongs to the bacterial ribosomal protein bL20 family.

The protein localises to the plastid. It localises to the chloroplast. Binds directly to 23S ribosomal RNA and is necessary for the in vitro assembly process of the 50S ribosomal subunit. It is not involved in the protein synthesizing functions of that subunit. The polypeptide is Large ribosomal subunit protein bL20c (Nephroselmis olivacea (Green alga)).